The sequence spans 203 residues: MKGKLIVLEGIDGSGKSSIGMMLTDILNNIGIKSIYTFEPTHAYYGSKLRESMLSKDLTPEEELSLFIADRKEHIKHMIRPAINDGYVIVLDRYMHSSIAYQGAKGIDKEYIYNLHKDFILEPDLVFILHLNIETALNRIMEKRGFVDRFENKHYLEEVDKIFSSFNEPYMHHIDASKDQKSICDEILNTIKESKILPLDSLQ.

10–17 (GIDGSGKS) serves as a coordination point for ATP.

This sequence belongs to the thymidylate kinase family.

It catalyses the reaction dTMP + ATP = dTDP + ADP. Functionally, phosphorylation of dTMP to form dTDP in both de novo and salvage pathways of dTTP synthesis. In Brachyspira hyodysenteriae (strain ATCC 49526 / WA1), this protein is Thymidylate kinase.